We begin with the raw amino-acid sequence, 333 residues long: Regulator of rDNA transcription protein 5 (333 aa).

Residues 1-22 are disordered; sequence MFERQSNNPEPIEVSDNNPERE. Positions 31–114 constitute an RRM 1 domain; sequence TRIYISNLDY…RNLKVKLYVP (84 aa). Disordered regions lie at residues 123–185 and 281–333; these read PAPK…DTVY and GIAE…SVVA. The segment covering 125-137 has biased composition (basic residues); sequence PKPRRLSKLRRSK. Composition is skewed to polar residues over residues 145-160 and 169-182; these read NAAS…QERG and AANN…TSDD. Residues 182–267 enclose the RRM 2 domain; that stretch reads DTVYCGYLPK…KKISVKPAYI (86 aa). Positions 298-308 are enriched in gly residues; that stretch reads GNGGQPAGPGV. Positions 313–327 are enriched in polar residues; sequence SNPQQNCDNSNNVQP.

This sequence belongs to the RRT5 family.

In terms of biological role, may be involved in the modulation of rDNA transcription. The chain is Regulator of rDNA transcription protein 5 (RRT5) from Vanderwaltozyma polyspora (strain ATCC 22028 / DSM 70294 / BCRC 21397 / CBS 2163 / NBRC 10782 / NRRL Y-8283 / UCD 57-17) (Kluyveromyces polysporus).